Here is a 154-residue protein sequence, read N- to C-terminus: MSAEKKKELQVAALENGTAIDHIPPSQLFKVASLLGLEKMNNTITIGNNFHSNKMGCKGMIKIADKFFEEDEINRIAMIAPNIILNIIRDYEVVEKKTVTLPDELIGLVKCNNPKCITNNEPMLSRFHVIDKEKGTIKCHYCERKINKEDIIIK.

Residues cysteine 111, cysteine 116, cysteine 139, and cysteine 142 each coordinate Zn(2+).

The protein belongs to the PyrI family. In terms of assembly, contains catalytic and regulatory chains. It depends on Zn(2+) as a cofactor.

In terms of biological role, involved in allosteric regulation of aspartate carbamoyltransferase. The protein is Aspartate carbamoyltransferase regulatory chain of Parabacteroides distasonis (strain ATCC 8503 / DSM 20701 / CIP 104284 / JCM 5825 / NCTC 11152).